Consider the following 137-residue polypeptide: Small ribosomal subunit protein uS12 (137 aa).

The interval 1–26 (MPTINQLVRKPRQSKIKKSTSPALNK) is disordered. Residues 9 to 18 (RKPRQSKIKK) are compositionally biased toward basic residues.

The protein belongs to the universal ribosomal protein uS12 family. In terms of assembly, part of the 30S ribosomal subunit. Contacts proteins S8 and S17. May interact with IF1 in the 30S initiation complex.

With S4 and S5 plays an important role in translational accuracy. Functionally, interacts with and stabilizes bases of the 16S rRNA that are involved in tRNA selection in the A site and with the mRNA backbone. Located at the interface of the 30S and 50S subunits, it traverses the body of the 30S subunit contacting proteins on the other side and probably holding the rRNA structure together. The combined cluster of proteins S8, S12 and S17 appears to hold together the shoulder and platform of the 30S subunit. The chain is Small ribosomal subunit protein uS12 from Listeria innocua serovar 6a (strain ATCC BAA-680 / CLIP 11262).